The sequence spans 890 residues: Translation initiation factor IF-2 (890 aa).

The interval 45–304 (LIDHLNQKNS…LQQGFQKPAQ (260 aa)) is disordered. Residues 67–81 (STLNIPGTGGKSKSV) are compositionally biased toward polar residues. Basic and acidic residues predominate over residues 92 to 217 (VKRDPQEAER…RMAEENKWTD (126 aa)). Residues 252-266 (GRGRNAKAARPKKGN) show a composition bias toward basic residues. Basic and acidic residues predominate over residues 267 to 280 (KHAESKADREEARA). A tr-type G domain is found at 389–558 (PRAPVVTIMG…LLQAEVLELK (170 aa)). The tract at residues 398–405 (GHVDHGKT) is G1. A GTP-binding site is contributed by 398-405 (GHVDHGKT). Positions 423 to 427 (GITQH) are G2. A G3 region spans residues 444–447 (DTPG). Residues 444 to 448 (DTPGH) and 498 to 501 (NKID) contribute to the GTP site. Positions 498–501 (NKID) are G4. The tract at residues 534–536 (SAK) is G5. N6-acetyllysine is present on Lys-808.

The protein belongs to the TRAFAC class translation factor GTPase superfamily. Classic translation factor GTPase family. IF-2 subfamily.

The protein localises to the cytoplasm. In terms of biological role, one of the essential components for the initiation of protein synthesis. Protects formylmethionyl-tRNA from spontaneous hydrolysis and promotes its binding to the 30S ribosomal subunits. Also involved in the hydrolysis of GTP during the formation of the 70S ribosomal complex. In Escherichia coli O127:H6 (strain E2348/69 / EPEC), this protein is Translation initiation factor IF-2.